The following is a 408-amino-acid chain: Hepatocyte nuclear factor 4-gamma (408 aa).

The nuclear receptor DNA-binding region spans 9–84 (NCLCAICGDR…AGMKKEAVQN (76 aa)). 2 NR C4-type zinc fingers span residues 12–32 (CAICGDRATGKHYGASSCDGC) and 48–72 (CRFSRQCVVDKDKRNQCRYCRLRKC). S94 bears the Phosphoserine mark. The NR LBD domain maps to 99 to 328 (SNIPSINTLA…NLLQEMLLGG (230 aa)). Residues 368–390 (ISTPETPLPSPPQGSGQEQYKIA) form a disordered region. 2 positions are modified to phosphothreonine: T370 and T373. S377 is modified (phosphoserine).

It belongs to the nuclear hormone receptor family. NR2 subfamily. As to expression, expressed in pancreas, kidney, small intestine and testis. Weakly expressed in colon. Not expressed in liver, skeletal muscle, lung, placenta, brain, heart, peripheral blood, ovary, prostate, thymus and spleen.

The protein localises to the nucleus. Functionally, transcription factor. Has a lower transcription activation potential than HNF4-alpha. The polypeptide is Hepatocyte nuclear factor 4-gamma (HNF4G) (Homo sapiens (Human)).